The sequence spans 154 residues: Putative pre-16S rRNA nuclease (154 aa).

This sequence belongs to the YqgF nuclease family.

It localises to the cytoplasm. In terms of biological role, could be a nuclease involved in processing of the 5'-end of pre-16S rRNA. This Pelotomaculum thermopropionicum (strain DSM 13744 / JCM 10971 / SI) protein is Putative pre-16S rRNA nuclease.